The primary structure comprises 346 residues: Glycerol-3-phosphate dehydrogenase [NAD(P)+] (346 aa).

The NADPH site is built by Ser-15, Trp-16, Arg-36, and Lys-110. Sn-glycerol 3-phosphate contacts are provided by Lys-110, Gly-139, and Ser-141. Ala-143 lines the NADPH pocket. Positions 194, 247, 257, 258, and 259 each coordinate sn-glycerol 3-phosphate. The active-site Proton acceptor is Lys-194. Residue Arg-258 coordinates NADPH. The NADPH site is built by Val-282 and Glu-284.

The protein belongs to the NAD-dependent glycerol-3-phosphate dehydrogenase family.

The protein localises to the cytoplasm. The enzyme catalyses sn-glycerol 3-phosphate + NAD(+) = dihydroxyacetone phosphate + NADH + H(+). The catalysed reaction is sn-glycerol 3-phosphate + NADP(+) = dihydroxyacetone phosphate + NADPH + H(+). It participates in membrane lipid metabolism; glycerophospholipid metabolism. In terms of biological role, catalyzes the reduction of the glycolytic intermediate dihydroxyacetone phosphate (DHAP) to sn-glycerol 3-phosphate (G3P), the key precursor for phospholipid synthesis. The protein is Glycerol-3-phosphate dehydrogenase [NAD(P)+] of Xylella fastidiosa (strain Temecula1 / ATCC 700964).